A 256-amino-acid chain; its full sequence is uncharacterized protein (256 aa).

A signal peptide spans 1-24 (MIKRVNKLVIGISLLFLVISITAG). C25 carries N-palmitoyl cysteine lipidation. A lipid anchor (S-diacylglycerol cysteine) is attached at C25.

This sequence belongs to the staphylococcal tandem lipoprotein family.

It is found in the cell membrane. This is an uncharacterized protein from Staphylococcus aureus (strain bovine RF122 / ET3-1).